The sequence spans 517 residues: ATP synthase subunit alpha (517 aa).

Position 174-181 (174-181) interacts with ATP; that stretch reads GDRQTGKT.

This sequence belongs to the ATPase alpha/beta chains family. In terms of assembly, F-type ATPases have 2 components, CF(1) - the catalytic core - and CF(0) - the membrane proton channel. CF(1) has five subunits: alpha(3), beta(3), gamma(1), delta(1), epsilon(1). CF(0) has four main subunits: a(1), b(1), b'(1) and c(9-12).

Its subcellular location is the cell inner membrane. The enzyme catalyses ATP + H2O + 4 H(+)(in) = ADP + phosphate + 5 H(+)(out). Produces ATP from ADP in the presence of a proton gradient across the membrane. The alpha chain is a regulatory subunit. The sequence is that of ATP synthase subunit alpha from Methylibium petroleiphilum (strain ATCC BAA-1232 / LMG 22953 / PM1).